The chain runs to 183 residues: Shikimate kinase (183 aa).

Residue 19–24 (GAGKTT) participates in ATP binding. Thr-23 contributes to the Mg(2+) binding site. Residues Asp-41, Arg-65, and Gly-87 each coordinate substrate. Arg-124 contacts ATP. Arg-143 contacts substrate.

The protein belongs to the shikimate kinase family. Monomer. Mg(2+) is required as a cofactor.

The protein localises to the cytoplasm. It catalyses the reaction shikimate + ATP = 3-phosphoshikimate + ADP + H(+). The protein operates within metabolic intermediate biosynthesis; chorismate biosynthesis; chorismate from D-erythrose 4-phosphate and phosphoenolpyruvate: step 5/7. In terms of biological role, catalyzes the specific phosphorylation of the 3-hydroxyl group of shikimic acid using ATP as a cosubstrate. The polypeptide is Shikimate kinase (Thermosynechococcus vestitus (strain NIES-2133 / IAM M-273 / BP-1)).